A 181-amino-acid chain; its full sequence is Inner membrane-spanning protein YciB (181 aa).

The next 5 membrane-spanning stretches (helical) occupy residues 3-23 (LLFD…FGIY), 54-74 (SLAI…PWFI), 81-101 (IYWL…KPLI), 119-139 (LNLA…YVAY), and 149-169 (FKLF…AFYL).

This sequence belongs to the YciB family.

Its subcellular location is the cell inner membrane. Its function is as follows. Plays a role in cell envelope biogenesis, maintenance of cell envelope integrity and membrane homeostasis. The chain is Inner membrane-spanning protein YciB from Legionella pneumophila (strain Corby).